We begin with the raw amino-acid sequence, 280 residues long: Feruloyl esterase 1 (280 aa).

Residues 1–20 (MKAFATRALAFSVAAGQALA) form the signal peptide. Cystine bridges form between Cys49–Cys278, Cys111–Cys114, and Cys247–Cys254. An N-linked (GlcNAc...) asparagine glycan is attached at Asn99. Catalysis depends on Ser153, which acts as the Nucleophile. The active-site Charge relay system is Asp214. Residue His267 is the Charge relay system of the active site.

It belongs to the AB hydrolase superfamily. FaeA family. In terms of processing, glycosylated.

The protein localises to the secreted. It catalyses the reaction feruloyl-polysaccharide + H2O = ferulate + polysaccharide.. Metal or basic ions Mn(2+), Ni(+), Mg(2+), and NH(4)(+) decrease the activity by 4.4% to 14.1%. The enzymatic activity is inhibited by Zn(2+) at a low concentration (1 mM) but not a high concentration (5 mM). Loses about a quarter of activity by the addition of 1 mM of Cu(2+) or Fe(3+) and activity is completely suppressed when the concentration was up to 5 mM. Low concentrations (0.25 and 0.5 M) of NaCl improve the activity by 5.6 % or 8.3%, respectively. Its function is as follows. Involved in degradation of plant cell walls. Hydrolyzes the feruloyl-arabinose ester bond in arabinoxylans, and the feruloyl-galactose ester bond in pectin. The sequence is that of Feruloyl esterase 1 from Penicillium parvum (Eupenicillium parvum).